The sequence spans 299 residues: 4-hydroxybenzoate octaprenyltransferase (299 aa).

A run of 7 helical transmembrane segments spans residues 31–51 (IGIY…ADGL), 54–74 (WDVL…GCVI), 105–125 (VLFF…TNPL), 148–168 (QLPQ…AFAA), 177–197 (IWVL…FYAM), 241–261 (FGLG…FAYQ), and 277–297 (FLHN…DKLI).

It belongs to the UbiA prenyltransferase family. It depends on Mg(2+) as a cofactor.

Its subcellular location is the cell inner membrane. It catalyses the reaction all-trans-octaprenyl diphosphate + 4-hydroxybenzoate = 4-hydroxy-3-(all-trans-octaprenyl)benzoate + diphosphate. The protein operates within cofactor biosynthesis; ubiquinone biosynthesis. Its function is as follows. Catalyzes the prenylation of para-hydroxybenzoate (PHB) with an all-trans polyprenyl group. Mediates the second step in the final reaction sequence of ubiquinone-8 (UQ-8) biosynthesis, which is the condensation of the polyisoprenoid side chain with PHB, generating the first membrane-bound Q intermediate 3-octaprenyl-4-hydroxybenzoate. The protein is 4-hydroxybenzoate octaprenyltransferase of Saccharophagus degradans (strain 2-40 / ATCC 43961 / DSM 17024).